A 280-amino-acid chain; its full sequence is Large ribosomal subunit protein uL2 (280 aa).

Disordered regions lie at residues 33 to 55 (LTEG…RRRG) and 224 to 266 (AMNP…KASQ). The span at 256 to 266 (TRTRNKNKASQ) shows a compositional bias: basic residues.

The protein belongs to the universal ribosomal protein uL2 family. As to quaternary structure, part of the 50S ribosomal subunit. Forms a bridge to the 30S subunit in the 70S ribosome.

Functionally, one of the primary rRNA binding proteins. Required for association of the 30S and 50S subunits to form the 70S ribosome, for tRNA binding and peptide bond formation. It has been suggested to have peptidyltransferase activity; this is somewhat controversial. Makes several contacts with the 16S rRNA in the 70S ribosome. In Ruegeria pomeroyi (strain ATCC 700808 / DSM 15171 / DSS-3) (Silicibacter pomeroyi), this protein is Large ribosomal subunit protein uL2.